Here is a 104-residue protein sequence, read N- to C-terminus: Ribonuclease P protein component 4 (104 aa).

The Zn(2+) site is built by Cys-57, Cys-60, Cys-83, and Cys-86.

Belongs to the eukaryotic/archaeal RNase P protein component 4 family. Consists of a catalytic RNA component and at least 4-5 protein subunits. It depends on Zn(2+) as a cofactor.

It is found in the cytoplasm. The catalysed reaction is Endonucleolytic cleavage of RNA, removing 5'-extranucleotides from tRNA precursor.. Functionally, part of ribonuclease P, a protein complex that generates mature tRNA molecules by cleaving their 5'-ends. This Saccharolobus islandicus (strain M.14.25 / Kamchatka #1) (Sulfolobus islandicus) protein is Ribonuclease P protein component 4.